Reading from the N-terminus, the 825-residue chain is MDVSLCPAKCSFWRIFLLGSVWLDYVGSVLACPANCVCSKTEINCRRPDDGNLFPLLEGQDSGNSNGNASINITDISRNITSIHIENWRGLHTLNAVDMELYTGLQKLTIKNSGLRNIQPRAFAKNPHLRYINLSSNRLTTLSWQLFQTLSLRELRLEQNFFNCSCDIRWMQLWQEQGEARLDSQSLYCISADGSQLPLFRMNISQCDLPEISVSHVNLTVREGDNAVITCNGSGSPLPDVDWIVTGLQSINTHQTNLNWTNVHAINLTLVNVTSEDNGFTLTCIAENVVGMSNASVALTVYYPPRVVSLVEPEVRLEHCIEFVVRGNPTPTLHWLYNGQPLRESKIIHMDYYQEGEVSEGCLLFNKPTHYNNGNYTLIAKNALGTANQTINGHFLKEPFPESTDFFDFESDASPTPPITVTHKPEEDTFGVSIAVGLAAFACVLLVVLFIMINKYGRRSKFGMKGPVAVISGEEDSASPLHHINHGITTPSSLDAGPDTVVIGMTRIPVIENPQYFRQGHNCHKPDTYVQHIKRRDIVLKRELGEGAFGKVFLAECYNLSPTKDKMLVAVKALKDPTLAARKDFQREAELLTNLQHEHIVKFYGVCGDGDPLIMVFEYMKHGDLNKFLRAHGPDAMILVDGQPRQAKGELGLSQMLHIASQIASGMVYLASQHFVHRDLATRNCLVGANLLVKIGDFGMSRDVYSTDYYRVGGHTMLPIRWMPPESIMYRKFTTESDVWSFGVILWEIFTYGKQPWFQLSNTEVIECITQGRVLERPRVCPKEVYDVMLGCWQREPQQRLNIKEIYKILHALGKATPIYLDILG.

An N-terminal signal peptide occupies residues 1 to 31 (MDVSLCPAKCSFWRIFLLGSVWLDYVGSVLA). Disulfide bonds link cysteine 32–cysteine 38 and cysteine 36–cysteine 45. Residues 32–429 (CPANCVCSKT…TVTHKPEEDT (398 aa)) are Extracellular-facing. 3 N-linked (GlcNAc...) asparagine glycosylation sites follow: asparagine 68, asparagine 72, and asparagine 79. LRR repeat units follow at residues 104–125 (GLQK…AFAK) and 128–149 (HLRY…LFQT). N-linked (GlcNAc...) asparagine glycans are attached at residues asparagine 133 and asparagine 163. The region spanning 160-209 (NFFNCSCDIRWMQLWQEQGEARLDSQSLYCISADGSQLPLFRMNISQCDL) is the LRRCT domain. 2 disulfide bridges follow: cysteine 164/cysteine 189 and cysteine 166/cysteine 207. Residues asparagine 203, asparagine 218, asparagine 232, asparagine 259, asparagine 267, asparagine 272, and asparagine 294 are each glycosylated (N-linked (GlcNAc...) asparagine). Ig-like C2-type domains are found at residues 210 to 300 (PEIS…VALT) and 309 to 382 (SLVE…IAKN). A disulfide bridge links cysteine 231 with cysteine 284. Cysteine 320 and cysteine 362 are joined by a disulfide. N-linked (GlcNAc...) asparagine glycans are attached at residues asparagine 375 and asparagine 388. A helical membrane pass occupies residues 430-453 (FGVSIAVGLAAFACVLLVVLFIMI). The Cytoplasmic portion of the chain corresponds to 454–825 (NKYGRRSKFG…ATPIYLDILG (372 aa)). Serine 493 carries the phosphoserine modification. Phosphotyrosine is present on tyrosine 516. The Protein kinase domain occupies 538–825 (IVLKRELGEG…ATPIYLDILG (288 aa)). ATP contacts are provided by residues 544 to 552 (LGEGAFGKV) and lysine 572. Residue aspartate 679 is the Proton acceptor of the active site. Phosphotyrosine; by autocatalysis is present on residues tyrosine 705, tyrosine 709, and tyrosine 710.

It belongs to the protein kinase superfamily. Tyr protein kinase family. Insulin receptor subfamily. Exists in a dynamic equilibrium between monomeric (low affinity) and dimeric (high affinity) structures. Binds SH2B2. Interacts with SQSTM1 and KIDINS220. Interacts with PTPRS. Interacts with MAPK8IP3/JIP3. Post-translationally, ligand-mediated auto-phosphorylation. In terms of tissue distribution, isoform 2 expression is restricted to specific areas in adult brain. Isoform 3 transcripts are readily detected early during embryogenesis and are expressed predominantly in adult brain and gonads.

The protein localises to the membrane. The catalysed reaction is L-tyrosyl-[protein] + ATP = O-phospho-L-tyrosyl-[protein] + ADP + H(+). In terms of biological role, receptor tyrosine kinase involved in nervous system and probably heart development. Upon binding of its ligand NTF3/neurotrophin-3, NTRK3 autophosphorylates and activates different signaling pathways, including the phosphatidylinositol 3-kinase/AKT and the MAPK pathways, that control cell survival and differentiation. This is NT-3 growth factor receptor (Ntrk3) from Mus musculus (Mouse).